A 302-amino-acid chain; its full sequence is Methionyl-tRNA formyltransferase (302 aa).

106–109 contributes to the (6S)-5,6,7,8-tetrahydrofolate binding site; it reads SVLP.

The protein belongs to the Fmt family.

It catalyses the reaction L-methionyl-tRNA(fMet) + (6R)-10-formyltetrahydrofolate = N-formyl-L-methionyl-tRNA(fMet) + (6S)-5,6,7,8-tetrahydrofolate + H(+). In terms of biological role, attaches a formyl group to the free amino group of methionyl-tRNA(fMet). The formyl group appears to play a dual role in the initiator identity of N-formylmethionyl-tRNA by promoting its recognition by IF2 and preventing the misappropriation of this tRNA by the elongation apparatus. This Hydrogenobaculum sp. (strain Y04AAS1) protein is Methionyl-tRNA formyltransferase.